The sequence spans 685 residues: Stromal interaction molecule 1 (685 aa).

The N-terminal stretch at Met1–Ser22 is a signal peptide. At Leu23 to Asp213 the chain is on the extracellular side. The tract at residues Ser24–Ser43 is disordered. Residues Thr32–Glu41 show a composition bias toward low complexity. 2 consecutive EF-hand domains span residues Ser64–Asn97 and Thr102–Ala126. Ca(2+)-binding residues include Asp76, Asp78, Asn80, Asp82, and Glu87. Asn131 and Asn171 each carry an N-linked (GlcNAc...) asparagine glycan. An SAM domain is found at Trp132–Phe200. The helical transmembrane segment at Phe214–Asn234 threads the bilayer. Topologically, residues Arg235 to Lys685 are cytoplasmic. Residues Leu248 to Val442 are a coiled coil. Ser257 is subject to Phosphoserine. The segment at Pro344–Val442 is SOAR/CAD. The segment at Asp475–Glu483 is contributes to fast Ca(2+)-dependent inactivation of CRAC channels. Low complexity predominate over residues Met490–Val499. The segment at Met490–Arg542 is disordered. Thr504 carries the post-translational modification Phosphothreonine. Position 512 is a phosphoserine (Ser512). Positions Asp515–Arg532 are enriched in basic and acidic residues. Thr517 is subject to Phosphothreonine. Ser519, Ser521, Ser523, Ser524, Ser567, Ser575, Ser602, Ser608, Ser618, Ser621, and Ser628 each carry phosphoserine. Residues Leu596–Lys685 are disordered. The span at Ser608 to Ser620 shows a compositional bias: low complexity. The short motif at Thr642–Pro645 is the Microtubule tip localization signal element. Acidic residues predominate over residues Glu655–Asp666. Ser660 is modified (phosphoserine). At Thr665 the chain carries Phosphothreonine. Ser668 carries the phosphoserine modification. Over residues Gly670 to Lys685 the composition is skewed to basic residues. Positions Lys672–Lys685 are required for generation of inwardly rectifying CRAC currents.

As to quaternary structure, monomer in the presence of Ca(2+). It oligomerizes in absence of Ca(2+). Forms homooligomers and heterooligomers with STIM2. Interacts with pore-forming subunits of CRAC channels, ORAI1, ORAI2 and ORAI3; this interaction is potentiated upon Ca(2+) store depletion. Interacts (via the transmembrane region and the SOAR/CAD domain) with SPPL3; the interaction promotes the binding of STIM1 to ORAI1. Interacts with ORAI1. Interacts with MAPRE1; probably required for targeting to the growing microtubule plus ends. Interacts with CRACR2A/EFCAB4B; the interaction is direct and takes place in absence of Ca(2+). Forms a complex with CRACR2A/EFCAB4B and ORAI1 at low concentration of Ca(2+), the complex dissociates at elevated Ca(2+) concentrations. Interacts with SARAF, promoting a slow inactivation of STIM1-dependent SOCE activity, possibly by facilitating the deoligomerization of STIM1. Interacts with EFHB; the interaction takes place upon Ca(2+)-store depletion and inhibits the association with SARAF. Interacts with ASPH. Interacts with SLC35G1; intracellular Ca(2+)-dependent. May interact with ATP1A1, ATP2A2, ATP2B1, ATP2B4, KPNB1 and XPO1; through SLC35G1. Interacts with TMEM203. Interacts with STIMATE, promoting STIM1 conformational switch. Interacts with TMEM178A. Interacts with CASQ1 (via C-terminal end and preferentially with the monomeric form); this interaction increases in response to a depletion of intracellular Ca(2+), decreases both STIM1 aggregation and clustering, interaction of STIM1 with ORAI1 and store-operated Ca(2+) entry (SOCE) activity. Interacts with ADCY8. Glycosylation is required for cell surface expression. In terms of processing, phosphorylated predominantly on Ser residues.

Its subcellular location is the cell membrane. The protein localises to the endoplasmic reticulum membrane. It localises to the sarcoplasmic reticulum. It is found in the cytoplasm. The protein resides in the cytoskeleton. In terms of biological role, acts as a Ca(2+) sensor that gates two major inward rectifying Ca(2+) channels at the plasma membrane: Ca(2+) release-activated Ca(2+) (CRAC) channels and arachidonate-regulated Ca(2+)-selective (ARC) channels. Plays a role in mediating store-operated Ca(2+) entry (SOCE), a Ca(2+) influx following depletion of intracellular Ca(2+) stores. Upon Ca(2+) depletion, translocates from the endoplasmic reticulum to the plasma membrane where it activates CRAC channel pore-forming subunits ORA1, ORA2 and ORAI3 to generate sustained and oscillatory Ca(2+) entry. Involved in enamel formation. This chain is Stromal interaction molecule 1, found in Rattus norvegicus (Rat).